The sequence spans 210 residues: Na(+)-translocating NADH-quinone reductase subunit D (210 aa).

6 helical membrane passes run 14–34 (PIINNNPIALQILGVCSALAV), 42–62 (LVMTIALTAVTAFSNLFISLI), 72–92 (IIVQMTIIASLVIVVDQVLQA), 96–116 (AISKQLSVFVGLIITNCIVMG), 131–151 (FMDGIGNGLGYGAILLSVGVV), and 178–198 (NGLLLLPPSAFFLIGGLIWLI).

The protein belongs to the NqrDE/RnfAE family. As to quaternary structure, composed of six subunits; NqrA, NqrB, NqrC, NqrD, NqrE and NqrF.

Its subcellular location is the cell inner membrane. It catalyses the reaction a ubiquinone + n Na(+)(in) + NADH + H(+) = a ubiquinol + n Na(+)(out) + NAD(+). Its function is as follows. NQR complex catalyzes the reduction of ubiquinone-1 to ubiquinol by two successive reactions, coupled with the transport of Na(+) ions from the cytoplasm to the periplasm. NqrA to NqrE are probably involved in the second step, the conversion of ubisemiquinone to ubiquinol. The chain is Na(+)-translocating NADH-quinone reductase subunit D from Shewanella frigidimarina (strain NCIMB 400).